The chain runs to 28 residues: uORF1 protein (28 aa).

The protein resides in the host cytoplasm. It localises to the host cytoskeleton. Plays a role in the reorganization of host microtubules and intermediate filaments to form a cytoskeletal cage that surrounds the viral factories, protecting the site of viral replication. May play a role in viral infection of human cortical neurons. In Zika virus (isolate ZIKV/Human/French Polynesia/10087PF/2013) (ZIKV), this protein is uORF1 protein.